Consider the following 303-residue polypeptide: Pyridoxal 5'-phosphate synthase subunit PdxS (303 aa).

Asp-33 contacts D-ribose 5-phosphate. Lys-90 serves as the catalytic Schiff-base intermediate with D-ribose 5-phosphate. Residue Gly-162 participates in D-ribose 5-phosphate binding. Residue Arg-174 coordinates D-glyceraldehyde 3-phosphate. D-ribose 5-phosphate is bound by residues Gly-223 and 244–245 (GS).

The protein belongs to the PdxS/SNZ family. In the presence of PdxT, forms a dodecamer of heterodimers.

The catalysed reaction is aldehydo-D-ribose 5-phosphate + D-glyceraldehyde 3-phosphate + L-glutamine = pyridoxal 5'-phosphate + L-glutamate + phosphate + 3 H2O + H(+). It functions in the pathway cofactor biosynthesis; pyridoxal 5'-phosphate biosynthesis. Functionally, catalyzes the formation of pyridoxal 5'-phosphate from ribose 5-phosphate (RBP), glyceraldehyde 3-phosphate (G3P) and ammonia. The ammonia is provided by the PdxT subunit. Can also use ribulose 5-phosphate and dihydroxyacetone phosphate as substrates, resulting from enzyme-catalyzed isomerization of RBP and G3P, respectively. In Mycobacterium avium (strain 104), this protein is Pyridoxal 5'-phosphate synthase subunit PdxS.